A 521-amino-acid polypeptide reads, in one-letter code: MFS siderochrome iron transporter 1 (521 aa).

The span at 1–10 shows a compositional bias: polar residues; it reads MDKTASLTSQ. Residues 1-29 form a disordered region; the sequence is MDKTASLTSQDAEKHDPDALRKERATDPP. Positions 11-29 are enriched in basic and acidic residues; that stretch reads DAEKHDPDALRKERATDPP. 5 consecutive transmembrane segments (helical) span residues 62–82, 99–119, 126–146, 148–168, and 187–207; these read WGLF…PLMG, FLSL…AFGC, WSFN…GGTQ, FVAL…NMPV, and ILSI…WPLI. A glycan (N-linked (GlcNAc...) asparagine) is linked at Asn209. The next 6 helical transmembrane spans lie at 229–249, 330–350, 379–399, 404–424, 431–451, and 466–486; these read YLLF…FFVF, LAWS…ASTL, VIIA…VEQP, KGTL…TTTA, LGWN…LYAI, and GLTA…ALYA. The N-linked (GlcNAc...) asparagine glycan is linked to Asn487. A helical transmembrane segment spans residues 491-511; it reads AVPVYVSGALIIASGAMALLL.

It belongs to the major facilitator superfamily.

The protein localises to the membrane. In terms of biological role, major facilitator transporter probably involved in siderophore basidioferrin transmembrane transport. This is MFS siderochrome iron transporter 1 from Ceriporiopsis subvermispora (strain B) (White-rot fungus).